A 710-amino-acid chain; its full sequence is Amyloid beta precursor protein binding family B member 1 (710 aa).

A Phosphoserine modification is found at Ser-135. Disordered regions lie at residues 143-256 and 276-300; these read EQGP…SDLP and GTTQ…ESQL. The span at 145–173 shows a compositional bias: acidic residues; sequence GPDEGEEKAAGEAEEDDEDEEEEEEEEDL. The residue at position 204 (Lys-204) is an N6-acetyllysine. Polar residues predominate over residues 223-234; the sequence is SWATLSQGSPSY. Residues 253–285 enclose the WW domain; sequence SDLPAGWMRVQDTSGTYYWHIPTGTTQWEPPGR. Residues 287–299 are compositionally biased toward low complexity; the sequence is SPSQGSSPQEESQ. Residues 370-509 enclose the PID 1 domain; sequence FAVRSLGWVE…SKIMSERRNA (140 aa). Ser-459 is modified (phosphoserine; by PKC). A Phosphoserine modification is found at Ser-517. Residues 542-699 form the PID 2 domain; sequence KFQVYYLGNV…RRGVQSLWGS (158 aa). Tyr-547 carries the phosphotyrosine; by ABL1 modification. The residue at position 610 (Ser-610) is a Phosphoserine; by SGK1. Lys-701 carries the post-translational modification N6-acetyllysine.

In terms of assembly, component of a complex, at least composed of APBB1, RASD1/DEXRAS1 and APP. Interacts (via PID domain 2) with APP (with the intracellular domain of the amyloid-beta precursor protein). Interacts (via PID domain 2) with RASD1/DEXRAS1; impairs the transcription activation activity. Interacts (via PID domain 1) with KAT5/TIP60. Interacts (via the WW domain) with the proline-rich region of APBB1IP. Interacts with TSHZ1 and TSHZ2. Interacts (via the WW domain) with histone H2AX (when phosphorylated on 'Tyr-142') and the proline-rich region of ENAH. Interacts with MAPK8. Interacts (via PID domain 1) with TSHZ3 (via homeobox domain). Interacts with SET. Found in a trimeric complex with HDAC1 and TSHZ3; the interaction between HDAC1 and APBB1 is mediated by TSHZ3. Interacts (via WWW domain) with NEK6. Interacts (via WWW domain) with ABL1. Interacts with RNF157. Interacts with ARF6. Polyubiquitination by RNF157 leads to degradation by the proteasome. In terms of processing, phosphorylation at Ser-610 by SGK1 promotes its localization to the nucleus. Phosphorylated following nuclear translocation. Phosphorylation at Tyr-546 by ABL1 enhances transcriptional activation activity and reduces the affinity for RASD1/DEXRAS1. Post-translationally, acetylation at Lys-204 and Lys-701 by KAT5 promotes its transcription activator activity. Phosphorylated at Ser-459 by PKC upon insulin activation. As to expression, expressed in the brain, retinal lens and muscle cells (at protein level).

It localises to the cell membrane. The protein localises to the cytoplasm. The protein resides in the nucleus. It is found in the cell projection. Its subcellular location is the growth cone. It localises to the nucleus speckle. Transcription coregulator that can have both coactivator and corepressor functions. Adapter protein that forms a transcriptionally active complex with the gamma-secretase-derived amyloid precursor protein (APP) intracellular domain. Plays a central role in the response to DNA damage by translocating to the nucleus and inducing apoptosis. May act by specifically recognizing and binding histone H2AX phosphorylated on 'Tyr-142' (H2AXY142ph) at double-strand breaks (DSBs), recruiting other pro-apoptosis factors such as MAPK8/JNK1. Required for histone H4 acetylation at double-strand breaks (DSBs). Its ability to specifically bind modified histones and chromatin modifying enzymes such as KAT5/TIP60, probably explains its transcription activation activity. Functions in association with TSHZ3, SET and HDAC factors as a transcriptional repressor, that inhibits the expression of CASP4. Associates with chromatin in a region surrounding the CASP4 transcriptional start site(s). Involved in hippocampal neurite branching and neuromuscular junction formation, as a result plays a role in spatial memory functioning. Plays a role in the maintenance of lens transparency. May play a role in muscle cell strength. Acts as a molecular adapter that functions in neurite outgrowth by activating the RAC1-ARF6 axis upon insulin treatment. This is Amyloid beta precursor protein binding family B member 1 from Mus musculus (Mouse).